The primary structure comprises 387 residues: Methionine aminopeptidase 1 (387 aa).

N-acetylserine is present on S2. Residues 2-10 (STATTTVTT) constitute a propeptide that is removed on maturation. A C6H2-type zinc finger spans residues 19–73 (KIYCSGLQCGRETSSQMKCPVCLKQGIVSIFCDTSCYENNYKAHKALHNAKDGLE). Residues C22, C27, C37, C40, C50, C54, H62, and H66 each contribute to the Zn(2+) site. H202 contributes to the a protein binding site. Zn(2+)-binding residues include D219, D230, and H294. An a protein-binding site is contributed by H301. 2 residues coordinate Zn(2+): E327 and E358.

Belongs to the peptidase M24A family. Methionine aminopeptidase type 1 subfamily. In terms of assembly, associates with the 60S ribosomal subunit of the 80S translational complex. It depends on Zn(2+) as a cofactor. The cofactor is Co(2+). Requires Mn(2+) as cofactor. Fe(2+) serves as cofactor.

The protein resides in the cytoplasm. The catalysed reaction is Release of N-terminal amino acids, preferentially methionine, from peptides and arylamides.. In contract to the MetAP 2 isoform, is not inhibited by the fungal metabolite fumagillin, an antiangiogenic drug. Functionally, cotranslationally removes the N-terminal methionine from nascent proteins. The N-terminal methionine is often cleaved when the second residue in the primary sequence is small and uncharged (Met-Ala-, Cys, Gly, Pro, Ser, Thr, or Val). Plays the major role in N-terminal methionine removal. Less efficient when the second residue is Val. The polypeptide is Methionine aminopeptidase 1 (MAP1) (Saccharomyces cerevisiae (strain ATCC 204508 / S288c) (Baker's yeast)).